The following is a 399-amino-acid chain: Argininosuccinate synthase (399 aa).

ATP contacts are provided by residues 10–18 (AYSGGVDTS) and alanine 38. Tyrosine 89 is a binding site for L-citrulline. ATP is bound at residue glycine 119. Residues threonine 121, asparagine 125, and aspartate 126 each contribute to the L-aspartate site. An L-citrulline-binding site is contributed by asparagine 125. The L-citrulline site is built by arginine 129, serine 177, serine 186, glutamate 262, and tyrosine 274.

Belongs to the argininosuccinate synthase family. Type 1 subfamily. In terms of assembly, homotetramer.

The protein resides in the cytoplasm. The enzyme catalyses L-citrulline + L-aspartate + ATP = 2-(N(omega)-L-arginino)succinate + AMP + diphosphate + H(+). It functions in the pathway amino-acid biosynthesis; L-arginine biosynthesis; L-arginine from L-ornithine and carbamoyl phosphate: step 2/3. The sequence is that of Argininosuccinate synthase from Picosynechococcus sp. (strain ATCC 27264 / PCC 7002 / PR-6) (Agmenellum quadruplicatum).